The primary structure comprises 396 residues: Tryptophan synthase beta chain (396 aa).

Lys86 carries the N6-(pyridoxal phosphate)lysine modification.

This sequence belongs to the TrpB family. Tetramer of two alpha and two beta chains. Requires pyridoxal 5'-phosphate as cofactor.

The catalysed reaction is (1S,2R)-1-C-(indol-3-yl)glycerol 3-phosphate + L-serine = D-glyceraldehyde 3-phosphate + L-tryptophan + H2O. It functions in the pathway amino-acid biosynthesis; L-tryptophan biosynthesis; L-tryptophan from chorismate: step 5/5. In terms of biological role, the beta subunit is responsible for the synthesis of L-tryptophan from indole and L-serine. In Yersinia enterocolitica serotype O:8 / biotype 1B (strain NCTC 13174 / 8081), this protein is Tryptophan synthase beta chain.